A 658-amino-acid polypeptide reads, in one-letter code: CXXC-type zinc finger protein 1 (658 aa).

At Met-1 the chain carries N-acetylmethionine. A compositionally biased stretch (acidic residues) spans 1–14 (MEGDASDPEPPDAG). The segment at 1–20 (MEGDASDPEPPDAGEDSKSE) is disordered. Ser-6 and Ser-19 each carry phosphoserine. Residues 28 to 76 (YCICRKPDINCFMIGCDNCNEWFHGDCIRITEKMAKAIREWYCRECREK) form a PHD-type zinc finger. Positions 84-164 (YRHKKSRERD…HQQQQQQQQI (81 aa)) are disordered. A compositionally biased stretch (basic and acidic residues) spans 90-120 (RERDSSERDGSEPRDEGGGRKRPAPDPDLQR). Residues 153–163 (QHHQQQQQQQQ) show a composition bias toward low complexity. The CXXC-type zinc-finger motif lies at 162–211 (QQIKRSARMCGECEACRRTEDCGHCDFCRDMKKFGGPNKIRQKCRLRQCQ). Positions 171, 174, 177, 183, 186, 189, 205, and 210 each coordinate Zn(2+). 2 disordered regions span residues 221 to 285 (FPSS…SDED) and 327 to 373 (VKVK…DPAS). Ser-226 carries the phosphoserine modification. Phosphothreonine is present on Thr-229. A Glycyl lysine isopeptide (Lys-Gly) (interchain with G-Cter in SUMO2) cross-link involves residue Lys-252. Basic residues predominate over residues 327–336 (VKVKHVKRRE). The segment covering 337-347 (KKSEKKKDERY) has biased composition (basic and acidic residues). Over residues 348 to 360 (KRHRQKQKHKDKW) the composition is skewed to basic residues. A compositionally biased stretch (basic and acidic residues) spans 361-370 (KHPERADAKD). Positions 428–470 (GKKLLERIRREQQSARTRLQEMERRFHELEAIILRAKQQAVRE) form a coiled coil.

In terms of assembly, component of the SET1 complex, at least composed of the catalytic subunit (SETD1A or SETD1B), WDR5, WDR82, RBBP5, ASH2L/ASH2, CXXC1/CFP1, HCFC1 and DPY30. Interacts with SETD1A. Interacts with ZNF335. Interacts with PRDM9; this interaction does not link PRDM9-activated recombination hotspot sites with DSB machinery and is not required for the hotspot recognition pathway. Interacts with histone H3K4me3. Post-translationally, may be regulated by proteolysis.

It localises to the nucleus speckle. The protein resides in the nucleus. Its function is as follows. Transcriptional activator that exhibits a unique DNA binding specificity for CpG unmethylated motifs with a preference for CpGG. In Bos taurus (Bovine), this protein is CXXC-type zinc finger protein 1 (CXXC1).